Here is a 270-residue protein sequence, read N- to C-terminus: 4-hydroxy-tetrahydrodipicolinate reductase (270 aa).

Residues 11-16 and E37 each bind NAD(+); that span reads GAGGRM. An NADP(+)-binding site is contributed by R38. Residues 101–103 and 125–128 contribute to the NAD(+) site; these read GTT and APNM. H158 (proton donor/acceptor) is an active-site residue. Residue H159 participates in (S)-2,3,4,5-tetrahydrodipicolinate binding. The active-site Proton donor is the K162. Residue 168–169 participates in (S)-2,3,4,5-tetrahydrodipicolinate binding; the sequence is GT.

It belongs to the DapB family.

The protein resides in the cytoplasm. The enzyme catalyses (S)-2,3,4,5-tetrahydrodipicolinate + NAD(+) + H2O = (2S,4S)-4-hydroxy-2,3,4,5-tetrahydrodipicolinate + NADH + H(+). It catalyses the reaction (S)-2,3,4,5-tetrahydrodipicolinate + NADP(+) + H2O = (2S,4S)-4-hydroxy-2,3,4,5-tetrahydrodipicolinate + NADPH + H(+). The protein operates within amino-acid biosynthesis; L-lysine biosynthesis via DAP pathway; (S)-tetrahydrodipicolinate from L-aspartate: step 4/4. Catalyzes the conversion of 4-hydroxy-tetrahydrodipicolinate (HTPA) to tetrahydrodipicolinate. The sequence is that of 4-hydroxy-tetrahydrodipicolinate reductase from Shewanella putrefaciens (strain CN-32 / ATCC BAA-453).